The chain runs to 907 residues: MALYREGKAAMAADGTVTGTGTKWQSSLSLIRPGATIMFLSSPIQMAVVNKVVSDTEIKAITTNGAVVASTDYAILLSDSLTVDGLAQDVAETLRYYQSQETVIADAVEFFKEFDFESLQNLANQIKADSEASESSAAAAAASESKAKTSEDNAKSSENAAKNSEVAAETTRDQIQQIIDNAGDQSTLVVLAQPDGFDSIGRVSSFAALRNLKPKKSGQHVLLTSYYDGWAAENKMPTGGGEFISSIGTATDDGGYIAAGPGYYWTRVVNNNSFTAEDFGCKTTATPPPNFNVLPAELFDNTAMMQAAFNLAISKSFKLNLSTGTYYFESSDTLRITGPIHIEGRPGTVFYHNPSNKANPKTDAFMNISGCSMGRISSINCFSNSYLGKGINFDRSVGDNRKLVLEHVYVDTFRWGFYVGEPECINQIEFHSCRAQSNYFQGIFIESFKEGQQYGHSAPVHFFNTICNGNGPTSFALGATYKTTKNEYIKVMDSVNDVGCQAYFQGLSNVQYIGGQLSGHGSPRNTSLATITQCNSFIIYGTDLEDINGFTTDGTAITTDNIDTIESNYLKDISGAAIVVSSCLGFKIDSPHIFKINTLSTIKLMNNTYNYEIGGFTPDEALKYNVWDANGLATNRISGVIHPRLVNSQLGINSVAFDNMSNKLDVSSLIHNETSQIIGLIPSTGSNVPHTRIMWSNGAMYSSTDLNNGFRLNYLSNHNEPLTPMHLYNEFSVSEFGGSVTESNALDEIKYIFIQTTYANSGDGRFIIQALDASGSVLSSNWYSPQSFNSTFPISGFVRFDVPTGAKKIRYGFVNSANYTGSLRSHFMSGFAYNKRFFLKIYAVYNDLGRYGQFEPPYSVAIDRFRVGDNTTQMPSIPASSATDVAGVNEVINSLLASLKANGFMSS.

The tract at residues Ala137–Glu169 is disordered. A compositionally biased stretch (basic and acidic residues) spans Ser145 to Lys155.

In the N-terminal section; belongs to the Webervirus depolymerase family. This sequence in the C-terminal section; belongs to the K2-specific depolymerase family. As to quaternary structure, homotrimer.

It is found in the virion. Functions as a receptor binding protein (RBP) and probably mediates the attachment to the host capsular exopolysaccharides. Displays a depolymerase activity that specifically degrades the K2-type polysaccharides of Klebsiella pneumoniae capsule, which allows the phage to reach the host cell membrane and bind the entry receptor. This Klebsiella (Bacteriophage B1) protein is Depolymerase, capsule K2-specific.